Consider the following 390-residue polypeptide: Phosphopentomutase (390 aa).

Residues Asp11, Asp283, His288, Asp324, His325, and His336 each contribute to the Mn(2+) site.

It belongs to the phosphopentomutase family. Mn(2+) serves as cofactor.

The protein localises to the cytoplasm. It catalyses the reaction 2-deoxy-alpha-D-ribose 1-phosphate = 2-deoxy-D-ribose 5-phosphate. The catalysed reaction is alpha-D-ribose 1-phosphate = D-ribose 5-phosphate. The protein operates within carbohydrate degradation; 2-deoxy-D-ribose 1-phosphate degradation; D-glyceraldehyde 3-phosphate and acetaldehyde from 2-deoxy-alpha-D-ribose 1-phosphate: step 1/2. Its function is as follows. Isomerase that catalyzes the conversion of deoxy-ribose 1-phosphate (dRib-1-P) and ribose 1-phosphate (Rib-1-P) to deoxy-ribose 5-phosphate (dRib-5-P) and ribose 5-phosphate (Rib-5-P), respectively. The sequence is that of Phosphopentomutase from Alkaliphilus oremlandii (strain OhILAs) (Clostridium oremlandii (strain OhILAs)).